A 347-amino-acid polypeptide reads, in one-letter code: GMP reductase (347 aa).

NADP(+) is bound at residue 108–131 (ADFEKTQQILSQNPQLNFVCIDVA). Residues Gly-181 and Gly-183 each coordinate K(+). The Thioimidate intermediate role is filled by Cys-186. Residue 216–239 (IISDGGCTMPGDVAKAFGGGADFV) coordinates NADP(+).

This sequence belongs to the IMPDH/GMPR family. GuaC type 1 subfamily. In terms of assembly, homotetramer.

It carries out the reaction IMP + NH4(+) + NADP(+) = GMP + NADPH + 2 H(+). In terms of biological role, catalyzes the irreversible NADPH-dependent deamination of GMP to IMP. It functions in the conversion of nucleobase, nucleoside and nucleotide derivatives of G to A nucleotides, and in maintaining the intracellular balance of A and G nucleotides. This Klebsiella pneumoniae subsp. pneumoniae (strain ATCC 700721 / MGH 78578) protein is GMP reductase.